A 143-amino-acid polypeptide reads, in one-letter code: Large ribosomal subunit protein uL11 (143 aa).

This sequence belongs to the universal ribosomal protein uL11 family. Part of the ribosomal stalk of the 50S ribosomal subunit. Interacts with L10 and the large rRNA to form the base of the stalk. L10 forms an elongated spine to which L12 dimers bind in a sequential fashion forming a multimeric L10(L12)X complex. In terms of processing, one or more lysine residues are methylated.

Functionally, forms part of the ribosomal stalk which helps the ribosome interact with GTP-bound translation factors. The protein is Large ribosomal subunit protein uL11 of Pseudomonas syringae pv. tomato (strain ATCC BAA-871 / DC3000).